The primary structure comprises 463 residues: SPARC-related modular calcium-binding protein 1 (463 aa).

The signal sequence occupies residues 1–25 (MLPARVRLLTPHLLLVLVQLSPAGG). The 53-residue stretch at 36–88 (SDRDPPCNPHCPRTQPKPICASDGRSYESMCEYQRAKCRDPALAVVHRGRCKD) folds into the Kazal-like domain. Cystine bridges form between Cys42/Cys73, Cys46/Cys66, Cys55/Cys86, Cys94/Cys117, Cys128/Cys135, and Cys137/Cys157. Positions 91-157 (QSKCRLERAQ…SSVQNKTPVC (67 aa)) constitute a Thyroglobulin type-1 1 domain. N-linked (GlcNAc...) asparagine glycosylation occurs at Asn224. A Thyroglobulin type-1 2 domain is found at 234 to 302 (VHSCDQERQS…TSTRYVMPSC (69 aa)). Intrachain disulfides connect Cys237–Cys261, Cys272–Cys279, and Cys281–Cys302. EF-hand domains are found at residues 369-404 (LEER…VKKK) and 406-441 (KPKK…SKEG). Asp382, Asn384, Ser386, Asp388, Glu393, Asp419, Asn421, Asp423, and Glu430 together coordinate Ca(2+). N-linked (GlcNAc...) asparagine glycosylation is present at Asn384.

In terms of processing, glycosylated. As to expression, widely expressed in many tissues with a strongest signal in ovary.

The protein localises to the secreted. Its subcellular location is the extracellular space. It is found in the extracellular matrix. It localises to the basement membrane. Its function is as follows. Probable regulator of osteoblast differentiation. Plays essential roles in both eye and limb development. This Mus musculus (Mouse) protein is SPARC-related modular calcium-binding protein 1 (Smoc1).